Consider the following 400-residue polypeptide: Probable vacuolar protease A (400 aa).

Residues 1-18 (MKGSLLLAGATLLGCTSA) form the signal peptide. A propeptide spans 19 to 72 (KLHSLKLKKVSLKEQLEHADIDVQIKSLGQKYMGIRPEQHEQQMFKEQTPIEAE) (activation peptide). The region spanning 87–397 (YFSEISIGTP…DLGKGTVGLA (311 aa)) is the Peptidase A1 domain. The active site involves aspartate 105. Cysteine 118 and cysteine 123 are disulfide-bonded. A glycan (N-linked (GlcNAc...) asparagine) is linked at asparagine 140. The active site involves aspartate 289. The cysteines at positions 323 and 356 are disulfide-linked. The N-linked (GlcNAc...) asparagine glycan is linked to asparagine 340.

The protein belongs to the peptidase A1 family.

The protein localises to the vacuole lumen. Its subcellular location is the secreted. The enzyme catalyses Hydrolysis of proteins with broad specificity for peptide bonds. Cleaves -Leu-Leu-|-Val-Tyr- bond in a synthetic substrate. Does not act on esters of Tyr or Arg.. In terms of biological role, vacuolar aspartic endopeptidase which is probably also secreted and contributes to virulence. In Trichophyton verrucosum (strain HKI 0517), this protein is Probable vacuolar protease A (PEP2).